A 487-amino-acid polypeptide reads, in one-letter code: Protein nucleotidyltransferase YdiU (487 aa).

ATP is bound by residues G90, G92, R93, K113, D125, G126, R176, and R183. The Proton acceptor role is filled by D252. Mg(2+) is bound by residues N253 and D262. ATP is bound at residue D262.

This sequence belongs to the SELO family. Requires Mg(2+) as cofactor. The cofactor is Mn(2+).

It catalyses the reaction L-seryl-[protein] + ATP = 3-O-(5'-adenylyl)-L-seryl-[protein] + diphosphate. The enzyme catalyses L-threonyl-[protein] + ATP = 3-O-(5'-adenylyl)-L-threonyl-[protein] + diphosphate. The catalysed reaction is L-tyrosyl-[protein] + ATP = O-(5'-adenylyl)-L-tyrosyl-[protein] + diphosphate. It carries out the reaction L-histidyl-[protein] + UTP = N(tele)-(5'-uridylyl)-L-histidyl-[protein] + diphosphate. It catalyses the reaction L-seryl-[protein] + UTP = O-(5'-uridylyl)-L-seryl-[protein] + diphosphate. The enzyme catalyses L-tyrosyl-[protein] + UTP = O-(5'-uridylyl)-L-tyrosyl-[protein] + diphosphate. Functionally, nucleotidyltransferase involved in the post-translational modification of proteins. It can catalyze the addition of adenosine monophosphate (AMP) or uridine monophosphate (UMP) to a protein, resulting in modifications known as AMPylation and UMPylation. The sequence is that of Protein nucleotidyltransferase YdiU from Ectopseudomonas mendocina (strain ymp) (Pseudomonas mendocina).